We begin with the raw amino-acid sequence, 225 residues long: Probable septum site-determining protein MinC (225 aa).

This sequence belongs to the MinC family. In terms of assembly, interacts with MinD and FtsZ.

Cell division inhibitor that blocks the formation of polar Z ring septums. Rapidly oscillates between the poles of the cell to destabilize FtsZ filaments that have formed before they mature into polar Z rings. Prevents FtsZ polymerization. This is Probable septum site-determining protein MinC from Listeria monocytogenes serotype 4a (strain HCC23).